Consider the following 88-residue polypeptide: Small ribosomal subunit protein uS19 (88 aa).

It belongs to the universal ribosomal protein uS19 family.

Its function is as follows. Protein S19 forms a complex with S13 that binds strongly to the 16S ribosomal RNA. The polypeptide is Small ribosomal subunit protein uS19 (Chlamydia abortus (strain DSM 27085 / S26/3) (Chlamydophila abortus)).